We begin with the raw amino-acid sequence, 418 residues long: Serine hydroxymethyltransferase (418 aa).

(6S)-5,6,7,8-tetrahydrofolate contacts are provided by residues leucine 121 and 125–127; that span reads GHL. Lysine 230 carries the post-translational modification N6-(pyridoxal phosphate)lysine. Residue 356-358 participates in (6S)-5,6,7,8-tetrahydrofolate binding; sequence SPF.

It belongs to the SHMT family. As to quaternary structure, homodimer. It depends on pyridoxal 5'-phosphate as a cofactor.

Its subcellular location is the cytoplasm. The enzyme catalyses (6R)-5,10-methylene-5,6,7,8-tetrahydrofolate + glycine + H2O = (6S)-5,6,7,8-tetrahydrofolate + L-serine. Its pathway is one-carbon metabolism; tetrahydrofolate interconversion. It functions in the pathway amino-acid biosynthesis; glycine biosynthesis; glycine from L-serine: step 1/1. Functionally, catalyzes the reversible interconversion of serine and glycine with tetrahydrofolate (THF) serving as the one-carbon carrier. This reaction serves as the major source of one-carbon groups required for the biosynthesis of purines, thymidylate, methionine, and other important biomolecules. Also exhibits THF-independent aldolase activity toward beta-hydroxyamino acids, producing glycine and aldehydes, via a retro-aldol mechanism. The sequence is that of Serine hydroxymethyltransferase from Shewanella woodyi (strain ATCC 51908 / MS32).